Reading from the N-terminus, the 366-residue chain is Patr class I histocompatibility antigen, C alpha chain (366 aa).

An N-terminal signal peptide occupies residues 1 to 24 (MRVTAPRTLLLLLSGGLALTETWA). The segment at 25–114 (GSHSLRYFDT…LRGYYNQSED (90 aa)) is alpha-1. Over 25-308 (GSHSLRYFDT…KPTSQPTIPI (284 aa)) the chain is Extracellular. Residue Asn-110 is glycosylated (N-linked (GlcNAc...) asparagine). Residues 115 to 206 (GSHTLQWMYG…ENGKETLQRT (92 aa)) are alpha-2. 2 disulfides stabilise this stretch: Cys-125–Cys-192 and Cys-227–Cys-283. The alpha-3 stretch occupies residues 207-298 (ECPKTHMTHH…GLPEPLTLRW (92 aa)). The Ig-like C1-type domain maps to 209-297 (PKTHMTHHPV…EGLPEPLTLR (89 aa)). A connecting peptide region spans residues 299-308 (KPTSQPTIPI). Residues 309-332 (VGIVAGLAVLAVLAVLGAVVTAMM) traverse the membrane as a helical segment. Over 333–366 (CRRKSSGGKGGSCSQAACSNSAQGSDESLIACKA) the chain is Cytoplasmic. Phosphoserine is present on residues Ser-357 and Ser-360.

This sequence belongs to the MHC class I family. As to quaternary structure, heterodimer of an alpha chain and a beta chain (beta-2-microglobulin).

The protein resides in the membrane. Its function is as follows. Involved in the presentation of foreign antigens to the immune system. The sequence is that of Patr class I histocompatibility antigen, C alpha chain from Pan troglodytes (Chimpanzee).